The primary structure comprises 157 residues: Siroheme decarboxylase NirG subunit (157 aa).

Belongs to the Ahb/Nir family. As to quaternary structure, forms a complex composed of NirDL, NirG and NirH. All proteins are required for the total conversion of siroheme to didecarboxysiroheme.

The enzyme catalyses siroheme + 2 H(+) = 12,18-didecarboxysiroheme + 2 CO2. The protein operates within porphyrin-containing compound metabolism. Its function is as follows. Involved in heme d1 biosynthesis. Catalyzes the decarboxylation of siroheme into didecarboxysiroheme. Siroheme is probably decarboxylated to monodecarboxysiroheme, which is in turn decarboxylated to didecarboxysiroheme. This Paracoccus pantotrophus (Thiosphaera pantotropha) protein is Siroheme decarboxylase NirG subunit.